We begin with the raw amino-acid sequence, 1072 residues long: Carbamoyl phosphate synthase large chain (1072 aa).

Residues 1 to 401 form a carboxyphosphate synthetic domain region; that stretch reads MPKRLDINTI…SLLKAVRSLE (401 aa). Residues arginine 129, arginine 169, glycine 175, glycine 176, lysine 208, isoleucine 210, glutamate 215, glycine 241, valine 242, histidine 243, glutamine 284, and glutamate 298 each contribute to the ATP site. The region spanning 133–327 is the ATP-grasp 1 domain; that stretch reads RTLMQELNEP…IAKLAAKIAV (195 aa). Positions 284, 298, and 300 each coordinate Mg(2+). The Mn(2+) site is built by glutamine 284, glutamate 298, and asparagine 300. Residues 402–546 are oligomerization domain; that stretch reads LGIYHLELDH…YSTYADENES (145 aa). The segment at 547 to 929 is carbamoyl phosphate synthetic domain; the sequence is IVTDRKSVVV…ALYKGLVASG (383 aa). The ATP-grasp 2 domain occupies 671-861; that stretch reads EAALTKLGIP…MANVATKVIL (191 aa). ATP contacts are provided by arginine 707, arginine 746, glutamate 752, glycine 777, valine 778, histidine 779, serine 780, glutamine 820, and glutamate 832. Mg(2+)-binding residues include glutamine 820, glutamate 832, and asparagine 834. Residues glutamine 820, glutamate 832, and asparagine 834 each coordinate Mn(2+). The MGS-like domain occupies 930–1072; the sequence is INIPTHGSVI…QTKRHEVVHA (143 aa). The allosteric domain stretch occupies residues 930 to 1072; it reads INIPTHGSVI…QTKRHEVVHA (143 aa).

Belongs to the CarB family. In terms of assembly, composed of two chains; the small (or glutamine) chain promotes the hydrolysis of glutamine to ammonia, which is used by the large (or ammonia) chain to synthesize carbamoyl phosphate. Tetramer of heterodimers (alpha,beta)4. The cofactor is Mg(2+). It depends on Mn(2+) as a cofactor.

The catalysed reaction is hydrogencarbonate + L-glutamine + 2 ATP + H2O = carbamoyl phosphate + L-glutamate + 2 ADP + phosphate + 2 H(+). It carries out the reaction hydrogencarbonate + NH4(+) + 2 ATP = carbamoyl phosphate + 2 ADP + phosphate + 2 H(+). It functions in the pathway amino-acid biosynthesis; L-arginine biosynthesis; carbamoyl phosphate from bicarbonate: step 1/1. Its pathway is pyrimidine metabolism; UMP biosynthesis via de novo pathway; (S)-dihydroorotate from bicarbonate: step 1/3. Functionally, large subunit of the glutamine-dependent carbamoyl phosphate synthetase (CPSase). CPSase catalyzes the formation of carbamoyl phosphate from the ammonia moiety of glutamine, carbonate, and phosphate donated by ATP, constituting the first step of 2 biosynthetic pathways, one leading to arginine and/or urea and the other to pyrimidine nucleotides. The large subunit (synthetase) binds the substrates ammonia (free or transferred from glutamine from the small subunit), hydrogencarbonate and ATP and carries out an ATP-coupled ligase reaction, activating hydrogencarbonate by forming carboxy phosphate which reacts with ammonia to form carbamoyl phosphate. The sequence is that of Carbamoyl phosphate synthase large chain from Bacillus cereus (strain AH820).